A 309-amino-acid polypeptide reads, in one-letter code: Zinc transporter ZIPB (309 aa).

Over 1–22 (MNQPSSLAADLRGAWHAQAQSH) the chain is Periplasmic. A helical membrane pass occupies residues 23 to 50 (PLITLGLAASAAGVVLLLVAGIVNALTG). The Extracellular segment spans residues 51-55 (ENRVH). The chain crosses the membrane as a helical span at residues 56 to 81 (VGYAVLGGAAGFAATALGALMALGLR). The Periplasmic portion of the chain corresponds to 82 to 83 (AI). Residues 84–119 (SARTQDAMLGFAAGMMLAASAFSLILPGLDAAGTIV) form a helical membrane-spanning segment. Residue Asp-89 participates in Zn(2+) binding. Met-99 lines the Cd(2+) pocket. Over 120 to 121 (GP) the chain is Extracellular. Residues 122–145 (GPAAAAVVALGLGLGVLLMLGLDY) form a helical membrane-spanning segment. Asp-144 contacts Zn(2+). Asp-144 contributes to the Cd(2+) binding site. The Periplasmic portion of the chain corresponds to 146–165 (FTPHEHERTGHQGPEAARVN). The chain crosses the membrane as a helical span at residues 166 to 190 (RVWLFVLTIILHNLPEGMAIGVSFA). Zn(2+) is bound at residue His-177. Cd(2+) is bound by residues His-177, Asn-178, and Glu-181. Position 181 (Glu-181) interacts with Zn(2+). Topologically, residues 191-192 (TG) are extracellular. Residues 193-222 (DLRIGLPLTSAIAIQDVPEGLAVALALRAV) form a helical membrane-spanning segment. Gln-207 lines the Zn(2+) pocket. Residues Gln-207, Asp-208, and Glu-211 each coordinate Cd(2+). Glu-211 is a binding site for Zn(2+). The Periplasmic portion of the chain corresponds to 223 to 224 (GL). A helical membrane pass occupies residues 225–251 (PIGRAVLVAVASGLMEPLGALVGVGIS). Glu-240 contacts Cd(2+). The Extracellular segment spans residues 252-255 (SGFA). Residues 256 to 275 (LAYPISMGLAAGAMIFVVSH) form a helical membrane-spanning segment. Zn(2+)-binding residues include His-275, Glu-276, and His-286. Position 275 (His-275) interacts with Cd(2+). The Periplasmic portion of the chain corresponds to 276–287 (EVIPETHRNGHE). A helical membrane pass occupies residues 288-308 (TTATVGLMAGFALMMFLDTAL). Residue Gly-309 is a topological domain, extracellular.

Belongs to the ZIP transporter (TC 2.A.5) family. As to quaternary structure, homodimer. Also exists as a monomer.

Its subcellular location is the cell inner membrane. The catalysed reaction is Zn(2+)(in) = Zn(2+)(out). The enzyme catalyses Cd(2+)(in) = Cd(2+)(out). Functionally, selective electrodiffusional channel that mediates the uptake of Zn(2+). Exploits in vivo zinc concentration gradients (maintained by cellular zinc homeostasis) to passively move zinc ions into the cytoplasm. ZIPB-mediated zinc flux is dependent upon pH, but independent of the proton motive force. Is also able to import Cd(2+), but is not permeable to Co(2+), Cu(2+), Fe(2+), Mn(2+) and Ni(2+). The sequence is that of Zinc transporter ZIPB from Bordetella bronchiseptica (strain ATCC BAA-588 / NCTC 13252 / RB50) (Alcaligenes bronchisepticus).